The chain runs to 386 residues: Phosphoglycerate kinase (386 aa).

Residues 21–23, arginine 36, 59–62, arginine 113, and arginine 146 each bind substrate; these read DLN and HLGR. ATP is bound by residues lysine 197, glutamate 313, and 339–342; that span reads GGDT.

It belongs to the phosphoglycerate kinase family. As to quaternary structure, monomer.

The protein resides in the cytoplasm. The catalysed reaction is (2R)-3-phosphoglycerate + ATP = (2R)-3-phospho-glyceroyl phosphate + ADP. It functions in the pathway carbohydrate degradation; glycolysis; pyruvate from D-glyceraldehyde 3-phosphate: step 2/5. This chain is Phosphoglycerate kinase, found in Serratia proteamaculans (strain 568).